The chain runs to 153 residues: Holo-[acyl-carrier-protein] synthase (153 aa).

Residues aspartate 24 and glutamate 78 each coordinate Mg(2+).

It belongs to the P-Pant transferase superfamily. AcpS family. Mg(2+) is required as a cofactor.

Its subcellular location is the cytoplasm. The enzyme catalyses apo-[ACP] + CoA = holo-[ACP] + adenosine 3',5'-bisphosphate + H(+). Its function is as follows. Transfers the 4'-phosphopantetheine moiety from coenzyme A to a Ser of acyl-carrier-protein. The sequence is that of Holo-[acyl-carrier-protein] synthase from Bordetella parapertussis (strain 12822 / ATCC BAA-587 / NCTC 13253).